We begin with the raw amino-acid sequence, 236 residues long: Ribosome assembly factor MRT4 (236 aa).

Belongs to the universal ribosomal protein uL10 family. Associates with the pre-60S ribosomal particle.

The protein resides in the nucleus. It localises to the nucleolus. Its subcellular location is the cytoplasm. Functionally, component of the ribosome assembly machinery. Nuclear paralog of the ribosomal protein P0, it binds pre-60S subunits at an early stage of assembly in the nucleolus, and is replaced by P0 in cytoplasmic pre-60S subunits and mature 80S ribosomes. The polypeptide is Ribosome assembly factor MRT4 (Saccharomyces cerevisiae (strain ATCC 204508 / S288c) (Baker's yeast)).